The following is a 181-amino-acid chain: ATP synthase subunit delta (181 aa).

This sequence belongs to the ATPase delta chain family. In terms of assembly, F-type ATPases have 2 components, F(1) - the catalytic core - and F(0) - the membrane proton channel. F(1) has five subunits: alpha(3), beta(3), gamma(1), delta(1), epsilon(1). F(0) has three main subunits: a(1), b(2) and c(10-14). The alpha and beta chains form an alternating ring which encloses part of the gamma chain. F(1) is attached to F(0) by a central stalk formed by the gamma and epsilon chains, while a peripheral stalk is formed by the delta and b chains.

It localises to the cell membrane. In terms of biological role, f(1)F(0) ATP synthase produces ATP from ADP in the presence of a proton or sodium gradient. F-type ATPases consist of two structural domains, F(1) containing the extramembraneous catalytic core and F(0) containing the membrane proton channel, linked together by a central stalk and a peripheral stalk. During catalysis, ATP synthesis in the catalytic domain of F(1) is coupled via a rotary mechanism of the central stalk subunits to proton translocation. Functionally, this protein is part of the stalk that links CF(0) to CF(1). It either transmits conformational changes from CF(0) to CF(1) or is implicated in proton conduction. The polypeptide is ATP synthase subunit delta (Bacillus pumilus (strain SAFR-032)).